Reading from the N-terminus, the 30-residue chain is Dermonecrotic toxin LlSicTox-alphaIII-1 (30 aa).

His12 is a catalytic residue.

It belongs to the arthropod phospholipase D family. Class I subfamily. Requires Mg(2+) as cofactor. Contains 1 disulfide bond. As to expression, expressed by the venom gland.

It is found in the secreted. It catalyses the reaction an N-(acyl)-sphingosylphosphocholine = an N-(acyl)-sphingosyl-1,3-cyclic phosphate + choline. The catalysed reaction is an N-(acyl)-sphingosylphosphoethanolamine = an N-(acyl)-sphingosyl-1,3-cyclic phosphate + ethanolamine. It carries out the reaction a 1-acyl-sn-glycero-3-phosphocholine = a 1-acyl-sn-glycero-2,3-cyclic phosphate + choline. The enzyme catalyses a 1-acyl-sn-glycero-3-phosphoethanolamine = a 1-acyl-sn-glycero-2,3-cyclic phosphate + ethanolamine. In terms of biological role, dermonecrotic toxins cleave the phosphodiester linkage between the phosphate and headgroup of certain phospholipids (sphingolipid and lysolipid substrates), forming an alcohol (often choline) and a cyclic phosphate. This toxin acts on sphingomyelin (SM). It may also act on ceramide phosphoethanolamine (CPE), lysophosphatidylcholine (LPC) and lysophosphatidylethanolamine (LPE), but not on lysophosphatidylserine (LPS), and lysophosphatidylglycerol (LPG). It acts by transphosphatidylation, releasing exclusively cyclic phosphate products as second products. In vivo, intradermal injection induces dermonecrosis. Induces hemolysis, increased vascular permeability, edema, inflammatory response, and platelet aggregation. This is Dermonecrotic toxin LlSicTox-alphaIII-1 from Loxosceles laeta (South American recluse spider).